Consider the following 407-residue polypeptide: Protein S-acyltransferase 8 (407 aa).

The next 2 helical transmembrane spans lie at 29-49 (SLPL…VFVA) and 62-82 (GYAI…LLFF). One can recognise a DHHC domain in the interval 136–186 (KYCDTCMLYRPPRCSHCSICNNCVERFDHHCPWVGQCIGLRNYRYFFMFVS). Residue Cys-166 is the S-palmitoyl cysteine intermediate of the active site. 2 consecutive transmembrane segments (helical) span residues 181 to 201 (FFMF…MSAV) and 224 to 244 (AVVL…LTAF). A disordered region spans residues 348–368 (AEDANNNQPHHTLDIDHERAG). A compositionally biased stretch (basic and acidic residues) spans 358–368 (HTLDIDHERAG). Ser-385 carries the post-translational modification Phosphoserine.

Belongs to the DHHC palmitoyltransferase family. As to expression, expressed in flowers and pollen.

The protein resides in the cell membrane. It catalyses the reaction L-cysteinyl-[protein] + hexadecanoyl-CoA = S-hexadecanoyl-L-cysteinyl-[protein] + CoA. Its function is as follows. S-acyltransferase involved in protein lipid modification. This chain is Protein S-acyltransferase 8 (PAT08), found in Arabidopsis thaliana (Mouse-ear cress).